The primary structure comprises 219 residues: MTQILIVEDEQNLARFLELELTHENYNVDTEYDGQDGLDKALSHYYDLIILDLMLPSINGLEICRKIRQQQSTPIIIITAKSDTYDKVAGLDYGADDYIVKPFDIEELLARIRAILRRQPQKDIIDVNGITIDKNAFKVTVNGAEIELTKTEYDLLYLLAENKNHVMQREQILNHVWGYNSEVETNVVDVYIRYLRNKLKPYDRDKMIETVRGVGYVIR.

The Response regulatory domain maps to 3-116 (QILIVEDEQN…ELLARIRAIL (114 aa)). Asp-52 carries the 4-aspartylphosphate modification. The ompR/PhoB-type DNA-binding region spans 122 to 219 (KDIIDVNGIT…TVRGVGYVIR (98 aa)).

Phosphorylated by ArlS.

It is found in the cytoplasm. In terms of biological role, member of the two-component regulatory system ArlS/ArlR involved in the regulation of adhesion, autolysis, multidrug resistance and virulence. This Staphylococcus aureus (strain USA300) protein is Response regulator ArlR (arlR).